Here is a 547-residue protein sequence, read N- to C-terminus: Chaperonin GroEL (547 aa).

ATP-binding positions include Thr-30–Pro-33, Lys-51, Asp-87–Thr-91, Gly-415, Asn-479–Ala-481, and Asp-495.

The protein belongs to the chaperonin (HSP60) family. Forms a cylinder of 14 subunits composed of two heptameric rings stacked back-to-back. Interacts with the co-chaperonin GroES.

It is found in the cytoplasm. The catalysed reaction is ATP + H2O + a folded polypeptide = ADP + phosphate + an unfolded polypeptide.. In terms of biological role, together with its co-chaperonin GroES, plays an essential role in assisting protein folding. The GroEL-GroES system forms a nano-cage that allows encapsulation of the non-native substrate proteins and provides a physical environment optimized to promote and accelerate protein folding. The sequence is that of Chaperonin GroEL from Pseudomonas putida (strain GB-1).